The chain runs to 147 residues: UPF0306 protein YhbP (147 aa).

This sequence belongs to the UPF0306 family.

The chain is UPF0306 protein YhbP from Salmonella paratyphi A (strain AKU_12601).